The chain runs to 954 residues: Bifunctional glutamine synthetase adenylyltransferase/adenylyl-removing enzyme (954 aa).

The interval 1-450 (MENISNKPLS…HFIETVGGRT (450 aa)) is adenylyl removase. Residues 454–954 (GADLWTQQLW…MDIYQRILVD (501 aa)) form an adenylyl transferase region.

This sequence belongs to the GlnE family. The cofactor is Mg(2+).

The enzyme catalyses [glutamine synthetase]-O(4)-(5'-adenylyl)-L-tyrosine + phosphate = [glutamine synthetase]-L-tyrosine + ADP. It carries out the reaction [glutamine synthetase]-L-tyrosine + ATP = [glutamine synthetase]-O(4)-(5'-adenylyl)-L-tyrosine + diphosphate. Involved in the regulation of glutamine synthetase GlnA, a key enzyme in the process to assimilate ammonia. When cellular nitrogen levels are high, the C-terminal adenylyl transferase (AT) inactivates GlnA by covalent transfer of an adenylyl group from ATP to specific tyrosine residue of GlnA, thus reducing its activity. Conversely, when nitrogen levels are low, the N-terminal adenylyl removase (AR) activates GlnA by removing the adenylyl group by phosphorolysis, increasing its activity. The regulatory region of GlnE binds the signal transduction protein PII (GlnB) which indicates the nitrogen status of the cell. The protein is Bifunctional glutamine synthetase adenylyltransferase/adenylyl-removing enzyme of Shewanella woodyi (strain ATCC 51908 / MS32).